A 204-amino-acid polypeptide reads, in one-letter code: Protein GrpE (204 aa).

Composition is skewed to basic and acidic residues over residues 1 to 21 (MEEL…EVKG) and 36 to 46 (EEKIETEVEQK). Residues 1–46 (MEELEKDKIERNEEMSEEVKGEGPPSELEQSEEVVEEKIETEVEQK) form a disordered region.

It belongs to the GrpE family. In terms of assembly, homodimer.

It localises to the cytoplasm. Functionally, participates actively in the response to hyperosmotic and heat shock by preventing the aggregation of stress-denatured proteins, in association with DnaK and GrpE. It is the nucleotide exchange factor for DnaK and may function as a thermosensor. Unfolded proteins bind initially to DnaJ; upon interaction with the DnaJ-bound protein, DnaK hydrolyzes its bound ATP, resulting in the formation of a stable complex. GrpE releases ADP from DnaK; ATP binding to DnaK triggers the release of the substrate protein, thus completing the reaction cycle. Several rounds of ATP-dependent interactions between DnaJ, DnaK and GrpE are required for fully efficient folding. The protein is Protein GrpE of Caldanaerobacter subterraneus subsp. tengcongensis (strain DSM 15242 / JCM 11007 / NBRC 100824 / MB4) (Thermoanaerobacter tengcongensis).